We begin with the raw amino-acid sequence, 352 residues long: Peptide chain release factor 1 (352 aa).

At Gln229 the chain carries N5-methylglutamine.

The protein belongs to the prokaryotic/mitochondrial release factor family. Post-translationally, methylated by PrmC. Methylation increases the termination efficiency of RF1.

Its subcellular location is the cytoplasm. Its function is as follows. Peptide chain release factor 1 directs the termination of translation in response to the peptide chain termination codons UAG and UAA. The chain is Peptide chain release factor 1 from Acidiphilium cryptum (strain JF-5).